The primary structure comprises 138 residues: Large ribosomal subunit protein uL16c (138 aa).

This sequence belongs to the universal ribosomal protein uL16 family. Part of the 50S ribosomal subunit.

The protein localises to the plastid. The protein resides in the chloroplast. This chain is Large ribosomal subunit protein uL16c, found in Emiliania huxleyi (Coccolithophore).